Here is a 369-residue protein sequence, read N- to C-terminus: Polycomb group protein FERTILIZATION-INDEPENDENT ENDOSPERM (369 aa).

WD repeat units lie at residues 31–73 (EGKK…AISA), 81–123 (DKEE…IHKS), 126–166 (GHGD…CILI), 172–212 (GHRY…TYVE), 238–275 (IHTNYVDCNRWFGDFILSKSVDNEILLWEPQLKENSPG), 287–328 (VPMC…PVLI), and 335–368 (QSKSVIRQTAMSVDGSTILACCEDGTIWRWDVIT).

This sequence belongs to the WD repeat ESC family. In terms of assembly, interacts directly with MEA. These two proteins are probably indirectly associated with FIS2. In plants, PcG complexes are probably composed of a member of the EZ family (CLF or MEA), FIE, and a member of the VEFS family (FIS2, VRN2 or EMF2). Component of the plant homeodomain / polycomb repressive complex 2 (PHD-PRC2) large complex during prolonged cold, composed of core PRC2 components (VRN2, EZA1, FIE and MSI1), and three related PHD finger proteins (VIL1, VIL2 and VIN3) that mediates histone H3 trimethylation on 'Lys-27' (H3K27me3). Binds to ALP1. In terms of tissue distribution, expressed in cauline leaves, root and stems. In the male reproductive organ, it is expressed in the developing anther; and is abundant in microspore mother cells, in microsporocytes and in the tapetum, but is absent from vascular bundles, the connective tissue and the filament. It is also absent from pollen grains at subsequent developmental stages. In the developing female reproductive organs, it is highly expressed in all cells of the young ovules primordium before archesporial differentiation. Then, it is highly expressed in the ovule sporophytic tissue and the megaspore mother cell before meiosis, but is absent from placenta or the developing carpel. Then, it decreases.

The protein localises to the nucleus. Functionally, polycomb group (PcG) protein. PcG proteins act by forming multiprotein complexes, which are required to maintain the transcriptionally repressive state of homeotic genes throughout development. PcG proteins are not required to initiate repression, but to maintain it during later stages of development. They probably act via the methylation of histones, rendering chromatin heritably changed in its expressibility. Required to prevent the proliferation of the central cell by repressing unknown target genes before fertilization. Probably also involved in floral repression mechanism established during early plant development. Regulates the anteroposterior organization of the endosperm. Interacts with the promoter and represses the transcription of genes such as PHE1, that are paternally active and maternally silenced. In Arabidopsis thaliana (Mouse-ear cress), this protein is Polycomb group protein FERTILIZATION-INDEPENDENT ENDOSPERM (FIE).